The primary structure comprises 310 residues: Tagatose-6-phosphate kinase (310 aa).

The protein belongs to the carbohydrate kinase PfkB family. LacC subfamily.

The catalysed reaction is D-tagatofuranose 6-phosphate + ATP = D-tagatofuranose 1,6-bisphosphate + ADP + H(+). The protein operates within carbohydrate metabolism; D-tagatose 6-phosphate degradation; D-glyceraldehyde 3-phosphate and glycerone phosphate from D-tagatose 6-phosphate: step 1/2. This Lactococcus lactis subsp. lactis (Streptococcus lactis) protein is Tagatose-6-phosphate kinase.